The chain runs to 505 residues: ATP synthase subunit alpha (505 aa).

170-177 contacts ATP; the sequence is GDRQTGKT.

Belongs to the ATPase alpha/beta chains family. As to quaternary structure, F-type ATPases have 2 components, CF(1) - the catalytic core - and CF(0) - the membrane proton channel. CF(1) has five subunits: alpha(3), beta(3), gamma(1), delta(1), epsilon(1). CF(0) has four main subunits: a(1), b(1), b'(1) and c(9-12).

The protein localises to the cellular thylakoid membrane. It catalyses the reaction ATP + H2O + 4 H(+)(in) = ADP + phosphate + 5 H(+)(out). Its function is as follows. Produces ATP from ADP in the presence of a proton gradient across the membrane. The alpha chain is a regulatory subunit. This chain is ATP synthase subunit alpha, found in Prochlorococcus marinus (strain MIT 9515).